A 117-amino-acid polypeptide reads, in one-letter code: Large ribosomal subunit protein bL20 (117 aa).

Belongs to the bacterial ribosomal protein bL20 family.

Functionally, binds directly to 23S ribosomal RNA and is necessary for the in vitro assembly process of the 50S ribosomal subunit. It is not involved in the protein synthesizing functions of that subunit. This Neorickettsia sennetsu (strain ATCC VR-367 / Miyayama) (Ehrlichia sennetsu) protein is Large ribosomal subunit protein bL20.